The sequence spans 243 residues: 2-C-methyl-D-erythritol 4-phosphate cytidylyltransferase (243 aa).

This sequence belongs to the IspD/TarI cytidylyltransferase family. IspD subfamily.

It carries out the reaction 2-C-methyl-D-erythritol 4-phosphate + CTP + H(+) = 4-CDP-2-C-methyl-D-erythritol + diphosphate. It functions in the pathway isoprenoid biosynthesis; isopentenyl diphosphate biosynthesis via DXP pathway; isopentenyl diphosphate from 1-deoxy-D-xylulose 5-phosphate: step 2/6. Its function is as follows. Catalyzes the formation of 4-diphosphocytidyl-2-C-methyl-D-erythritol from CTP and 2-C-methyl-D-erythritol 4-phosphate (MEP). The sequence is that of 2-C-methyl-D-erythritol 4-phosphate cytidylyltransferase from Rhodopirellula baltica (strain DSM 10527 / NCIMB 13988 / SH1).